Here is a 200-residue protein sequence, read N- to C-terminus: Holliday junction resolvase RecU (200 aa).

Residues 1-25 are disordered; sequence MTIRYPNGKRYNQASQPQKTPIKTH. The segment covering 10–25 has biased composition (polar residues); it reads RYNQASQPQKTPIKTH. The Mg(2+) site is built by threonine 85, aspartate 87, glutamate 100, and glutamine 119.

It belongs to the RecU family. Mg(2+) serves as cofactor.

It localises to the cytoplasm. The catalysed reaction is Endonucleolytic cleavage at a junction such as a reciprocal single-stranded crossover between two homologous DNA duplexes (Holliday junction).. Functionally, endonuclease that resolves Holliday junction intermediates in genetic recombination. Cleaves mobile four-strand junctions by introducing symmetrical nicks in paired strands. Promotes annealing of linear ssDNA with homologous dsDNA. Required for DNA repair, homologous recombination and chromosome segregation. This is Holliday junction resolvase RecU from Bacillus cereus (strain B4264).